Consider the following 106-residue polypeptide: UPF0145 protein TM_0763 (106 aa).

This sequence belongs to the UPF0145 family.

In Thermotoga maritima (strain ATCC 43589 / DSM 3109 / JCM 10099 / NBRC 100826 / MSB8), this protein is UPF0145 protein TM_0763.